Here is a 143-residue protein sequence, read N- to C-terminus: Hemoglobin anodic subunit alpha (143 aa).

An N-acetylserine modification is found at Ser-2. The Globin domain occupies 2–143; the sequence is SLSAKDMAVV…FTLALSERYR (142 aa). His-60 contacts O2. Heme b is bound at residue His-89.

It belongs to the globin family. As to quaternary structure, heterotetramer of two alpha chains and two beta chains. As to expression, red blood cells.

In terms of biological role, involved in oxygen transport from gills to the various peripheral tissues. The sequence is that of Hemoglobin anodic subunit alpha (hba) from Anguilla anguilla (European freshwater eel).